Consider the following 153-residue polypeptide: Transcriptional repressor NrdR (153 aa).

A zinc finger spans residues 3–34 (CPSCQHHGTRVLDSRPVDEGRSIRRRRECEQC). One can recognise an ATP-cone domain in the interval 49–139 (LIVVKKQGMR…VYRQFKDLNV (91 aa)).

It belongs to the NrdR family. Zn(2+) is required as a cofactor.

Negatively regulates transcription of bacterial ribonucleotide reductase nrd genes and operons by binding to NrdR-boxes. The protein is Transcriptional repressor NrdR of Geobacillus sp. (strain WCH70).